Reading from the N-terminus, the 62-residue chain is MELSFTKILVILFVGFLVFGPDKLPALGRAAGKALSEFKQATSGLTQDIRKNDSENKEDKQM.

The chain crosses the membrane as a helical span at residues 8–28; sequence ILVILFVGFLVFGPDKLPALG.

The protein belongs to the TatA/E family. Forms a complex with TatC.

The protein resides in the cell membrane. In terms of biological role, part of the twin-arginine translocation (Tat) system that transports large folded proteins containing a characteristic twin-arginine motif in their signal peptide across membranes. TatA could form the protein-conducting channel of the Tat system. This chain is Sec-independent protein translocase protein TatAc, found in Bacillus subtilis (strain 168).